The chain runs to 353 residues: Neutral protease 2 homolog AO090001000135 (353 aa).

The N-terminal stretch at Met-1–Ala-19 is a signal peptide. The propeptide occupies Val-20–Arg-176. Intrachain disulfides connect Cys-182–Cys-254 and Cys-261–Cys-279. His-304 provides a ligand contact to Zn(2+). The active site involves Glu-305. Residues His-308 and Asp-319 each contribute to the Zn(2+) site.

The protein belongs to the peptidase M35 family. Requires Zn(2+) as cofactor.

It localises to the secreted. The enzyme catalyses Preferential cleavage of bonds with hydrophobic residues in P1'. Also 3-Asn-|-Gln-4 and 8-Gly-|-Ser-9 bonds in insulin B chain.. Functionally, secreted metalloproteinase that allows assimilation of proteinaceous substrates. Shows high activities on basic nuclear substrates such as histone and protamine. This is Neutral protease 2 homolog AO090001000135 from Aspergillus oryzae (strain ATCC 42149 / RIB 40) (Yellow koji mold).